A 106-amino-acid chain; its full sequence is UPF0122 protein Exig_1902 (106 aa).

It belongs to the UPF0122 family.

Functionally, might take part in the signal recognition particle (SRP) pathway. This is inferred from the conservation of its genetic proximity to ftsY/ffh. May be a regulatory protein. The polypeptide is UPF0122 protein Exig_1902 (Exiguobacterium sibiricum (strain DSM 17290 / CCUG 55495 / CIP 109462 / JCM 13490 / 255-15)).